Consider the following 41-residue polypeptide: Large ribosomal subunit protein bL36 (41 aa).

It belongs to the bacterial ribosomal protein bL36 family.

In Rhodopseudomonas palustris (strain BisA53), this protein is Large ribosomal subunit protein bL36.